We begin with the raw amino-acid sequence, 53 residues long: Conotoxin Bu27 (53 aa).

The propeptide occupies 1-12; the sequence is ASDGRNAVVHER. 4-hydroxyproline is present on Pro-14. Glu-15 is subject to 4-carboxyglutamate. Thr-19 and Thr-21 each carry an O-linked (HexNAc...) threonine glycan. Residues Pro-29, Pro-34, Pro-35, Pro-43, Pro-44, and Pro-48 each carry the 4-hydroxyproline modification. Position 48 is a proline amide (Pro-48). The propeptide occupies 49–53; that stretch reads GRRND.

This sequence belongs to the conotoxin A superfamily. Contains 3 disulfide bonds. In terms of tissue distribution, expressed by the venom duct.

It is found in the secreted. Functionally, probable neurotoxin with ion channel inhibitor activity. This chain is Conotoxin Bu27, found in Conus bullatus (Bubble cone).